A 96-amino-acid chain; its full sequence is uncharacterized protein (96 aa).

An N-terminal signal peptide occupies residues 1–21 (MLASVLILGAIAVGSAIPTIA).

This is an uncharacterized protein from Archaeoglobus fulgidus (strain ATCC 49558 / DSM 4304 / JCM 9628 / NBRC 100126 / VC-16).